A 355-amino-acid chain; its full sequence is Epoxyqueuosine reductase (355 aa).

The active-site Proton donor is the Asp143. The 4Fe-4S ferredoxin-type domain maps to 185-217; that stretch reads LPLPIDTPATAHCGTCTRCIDICPTQAIIAPHR. [4Fe-4S] cluster is bound by residues Cys197, Cys200, Cys203, Cys207, Cys223, Cys250, Cys253, and Cys257.

Belongs to the QueG family. Monomer. It depends on cob(II)alamin as a cofactor. [4Fe-4S] cluster serves as cofactor.

Its subcellular location is the cytoplasm. It carries out the reaction epoxyqueuosine(34) in tRNA + AH2 = queuosine(34) in tRNA + A + H2O. The protein operates within tRNA modification; tRNA-queuosine biosynthesis. In terms of biological role, catalyzes the conversion of epoxyqueuosine (oQ) to queuosine (Q), which is a hypermodified base found in the wobble positions of tRNA(Asp), tRNA(Asn), tRNA(His) and tRNA(Tyr). The sequence is that of Epoxyqueuosine reductase from Xanthomonas campestris pv. campestris (strain ATCC 33913 / DSM 3586 / NCPPB 528 / LMG 568 / P 25).